The following is a 490-amino-acid chain: Glutamyl-tRNA(Gln) amidotransferase subunit A (490 aa).

Active-site charge relay system residues include K78 and S153. S177 (acyl-ester intermediate) is an active-site residue.

The protein belongs to the amidase family. GatA subfamily. Heterotrimer of A, B and C subunits.

The catalysed reaction is L-glutamyl-tRNA(Gln) + L-glutamine + ATP + H2O = L-glutaminyl-tRNA(Gln) + L-glutamate + ADP + phosphate + H(+). In terms of biological role, allows the formation of correctly charged Gln-tRNA(Gln) through the transamidation of misacylated Glu-tRNA(Gln) in organisms which lack glutaminyl-tRNA synthetase. The reaction takes place in the presence of glutamine and ATP through an activated gamma-phospho-Glu-tRNA(Gln). This is Glutamyl-tRNA(Gln) amidotransferase subunit A from Bdellovibrio bacteriovorus (strain ATCC 15356 / DSM 50701 / NCIMB 9529 / HD100).